The primary structure comprises 428 residues: Spermidine/putrescine import ATP-binding protein PotA (428 aa).

The ABC transporter domain maps to 6–238 (IEFKNVSKTY…PINHFVADFI (233 aa)). 40–47 (GASGSGKS) provides a ligand contact to ATP.

It belongs to the ABC transporter superfamily. Spermidine/putrescine importer (TC 3.A.1.11.1) family. The complex is composed of two ATP-binding proteins (PotA), two transmembrane proteins (PotB and PotC) and a solute-binding protein (PotD).

The protein localises to the cell membrane. The catalysed reaction is ATP + H2O + polyamine-[polyamine-binding protein]Side 1 = ADP + phosphate + polyamineSide 2 + [polyamine-binding protein]Side 1.. Its function is as follows. Part of the ABC transporter complex PotABCD involved in spermidine/putrescine import. Responsible for energy coupling to the transport system. This Lactococcus lactis subsp. lactis (strain IL1403) (Streptococcus lactis) protein is Spermidine/putrescine import ATP-binding protein PotA.